Consider the following 590-residue polypeptide: Cytosolic Fe-S cluster assembly factor nar1 (590 aa).

C20 contacts [4Fe-4S] cluster. The interval E25–P50 is disordered. The [4Fe-4S] cluster site is built by C60, C63, C66, C204, and C259. Residues P423–S446 are disordered. Residues C461 and C465 each contribute to the [4Fe-4S] cluster site.

Belongs to the NARF family.

Its function is as follows. Component of the cytosolic Fe/S protein assembly machinery. Required for maturation of extramitochondrial Fe/S proteins. May play a role in the transfer of pre-assembled Fe/S clusters to target apoproteins. This Emericella nidulans (strain FGSC A4 / ATCC 38163 / CBS 112.46 / NRRL 194 / M139) (Aspergillus nidulans) protein is Cytosolic Fe-S cluster assembly factor nar1 (nar1).